The following is a 332-amino-acid chain: Biotin synthase (332 aa).

One can recognise a Radical SAM core domain in the interval 53-282 (HFGKKVKLNM…TKEIRISGGR (230 aa)). The [4Fe-4S] cluster site is built by cysteine 71, cysteine 75, and cysteine 78. [2Fe-2S] cluster contacts are provided by cysteine 115, cysteine 147, cysteine 207, and arginine 277.

It belongs to the radical SAM superfamily. Biotin synthase family. As to quaternary structure, homodimer. [4Fe-4S] cluster serves as cofactor. It depends on [2Fe-2S] cluster as a cofactor.

It carries out the reaction (4R,5S)-dethiobiotin + (sulfur carrier)-SH + 2 reduced [2Fe-2S]-[ferredoxin] + 2 S-adenosyl-L-methionine = (sulfur carrier)-H + biotin + 2 5'-deoxyadenosine + 2 L-methionine + 2 oxidized [2Fe-2S]-[ferredoxin]. Its pathway is cofactor biosynthesis; biotin biosynthesis; biotin from 7,8-diaminononanoate: step 2/2. In terms of biological role, catalyzes the conversion of dethiobiotin (DTB) to biotin by the insertion of a sulfur atom into dethiobiotin via a radical-based mechanism. The polypeptide is Biotin synthase (Bacillus cereus (strain G9842)).